The sequence spans 427 residues: Male abnormal protein mab-31 (427 aa).

The disordered stretch occupies residues 68-102; that stretch reads PIGTGRFPNPSPPRSSSGTNTPIRKTPGSRPDRGK.

It localises to the nucleus. Functionally, putative transcription factor. Acts in a TGF-beta-like pathway during development of male-specific genital sensilla (simple sense organs), known as rays. Involved in production of reactive oxygen species (ROS), acting downstream of the TGF-beta-like dbl-1 signaling pathway. Involved in locomotory behavior. This Caenorhabditis elegans protein is Male abnormal protein mab-31.